We begin with the raw amino-acid sequence, 205 residues long: Large ribosomal subunit protein bL25 (205 aa).

A disordered region spans residues 185–205; the sequence is PAGAVSEAAEGGEAAGETPAA. The span at 186-205 shows a compositional bias: low complexity; it reads AGAVSEAAEGGEAAGETPAA.

This sequence belongs to the bacterial ribosomal protein bL25 family. CTC subfamily. As to quaternary structure, part of the 50S ribosomal subunit; part of the 5S rRNA/L5/L18/L25 subcomplex. Contacts the 5S rRNA. Binds to the 5S rRNA independently of L5 and L18.

Functionally, this is one of the proteins that binds to the 5S RNA in the ribosome where it forms part of the central protuberance. This Cupriavidus taiwanensis (strain DSM 17343 / BCRC 17206 / CCUG 44338 / CIP 107171 / LMG 19424 / R1) (Ralstonia taiwanensis (strain LMG 19424)) protein is Large ribosomal subunit protein bL25.